A 1252-amino-acid chain; its full sequence is DNA-directed RNA polymerase subunit beta (1252 aa).

This sequence belongs to the RNA polymerase beta chain family. In terms of assembly, the RNAP catalytic core consists of 2 alpha, 1 beta, 1 beta' and 1 omega subunit. When a sigma factor is associated with the core the holoenzyme is formed, which can initiate transcription.

It carries out the reaction RNA(n) + a ribonucleoside 5'-triphosphate = RNA(n+1) + diphosphate. In terms of biological role, DNA-dependent RNA polymerase catalyzes the transcription of DNA into RNA using the four ribonucleoside triphosphates as substrates. In Chlamydia trachomatis serovar D (strain ATCC VR-885 / DSM 19411 / UW-3/Cx), this protein is DNA-directed RNA polymerase subunit beta.